The following is a 419-amino-acid chain: tRNA(Ile)-lysidine synthase (419 aa).

ATP is bound at residue 25 to 30; sequence SGGIDS.

The protein belongs to the tRNA(Ile)-lysidine synthase family.

The protein localises to the cytoplasm. The catalysed reaction is cytidine(34) in tRNA(Ile2) + L-lysine + ATP = lysidine(34) in tRNA(Ile2) + AMP + diphosphate + H(+). In terms of biological role, ligates lysine onto the cytidine present at position 34 of the AUA codon-specific tRNA(Ile) that contains the anticodon CAU, in an ATP-dependent manner. Cytidine is converted to lysidine, thus changing the amino acid specificity of the tRNA from methionine to isoleucine. The protein is tRNA(Ile)-lysidine synthase of Actinobacillus pleuropneumoniae serotype 7 (strain AP76).